The chain runs to 501 residues: Glycogen synthase 1 (501 aa).

Lys-18 is a binding site for ADP-alpha-D-glucose.

Belongs to the glycosyltransferase 1 family. Bacterial/plant glycogen synthase subfamily.

It carries out the reaction [(1-&gt;4)-alpha-D-glucosyl](n) + ADP-alpha-D-glucose = [(1-&gt;4)-alpha-D-glucosyl](n+1) + ADP + H(+). Its pathway is glycan biosynthesis; glycogen biosynthesis. In terms of biological role, synthesizes alpha-1,4-glucan chains using ADP-glucose. This Geobacter sulfurreducens (strain ATCC 51573 / DSM 12127 / PCA) protein is Glycogen synthase 1.